A 481-amino-acid chain; its full sequence is GTPase Obg (481 aa).

The Obg domain maps to threonine 2–valine 159. The region spanning alanine 160–alanine 330 is the OBG-type G domain. Residues glycine 166–serine 173, phenylalanine 191–valine 195, aspartate 212–glycine 215, asparagine 282–aspartate 285, and serine 311–alanine 313 each bind GTP. 2 residues coordinate Mg(2+): serine 173 and threonine 193. Positions proline 348–proline 426 constitute an OCT domain. Residues aspartate 440–glutamate 481 form a disordered region. Positions glutamate 469–glutamate 481 are enriched in acidic residues.

The protein belongs to the TRAFAC class OBG-HflX-like GTPase superfamily. OBG GTPase family. As to quaternary structure, monomer. It depends on Mg(2+) as a cofactor.

Its subcellular location is the cytoplasm. Functionally, an essential GTPase which binds GTP, GDP and possibly (p)ppGpp with moderate affinity, with high nucleotide exchange rates and a fairly low GTP hydrolysis rate. Plays a role in control of the cell cycle, stress response, ribosome biogenesis and in those bacteria that undergo differentiation, in morphogenesis control. This Salinispora arenicola (strain CNS-205) protein is GTPase Obg.